A 403-amino-acid chain; its full sequence is Argininosuccinate synthase (403 aa).

ATP contacts are provided by residues 12–20 (AYSGGLDTS) and alanine 39. Tyrosine 91 contacts L-citrulline. Glycine 121 is a binding site for ATP. L-aspartate is bound by residues threonine 123, asparagine 127, and aspartate 128. Position 127 (asparagine 127) interacts with L-citrulline. Arginine 131, serine 180, serine 189, glutamate 265, and tyrosine 277 together coordinate L-citrulline.

It belongs to the argininosuccinate synthase family. Type 1 subfamily. Homotetramer.

The protein resides in the cytoplasm. The enzyme catalyses L-citrulline + L-aspartate + ATP = 2-(N(omega)-L-arginino)succinate + AMP + diphosphate + H(+). It participates in amino-acid biosynthesis; L-arginine biosynthesis; L-arginine from L-ornithine and carbamoyl phosphate: step 2/3. This Buchnera aphidicola subsp. Acyrthosiphon pisum (strain 5A) protein is Argininosuccinate synthase.